The following is a 423-amino-acid chain: Gamma-glutamyl phosphate reductase (423 aa).

Over residues 1–14 (MTLQAAPRSAAAQQ) the composition is skewed to low complexity. The interval 1-25 (MTLQAAPRSAAAQQREPDLRQEVHD) is disordered. The segment covering 15–25 (REPDLRQEVHD) has biased composition (basic and acidic residues).

This sequence belongs to the gamma-glutamyl phosphate reductase family.

It is found in the cytoplasm. The catalysed reaction is L-glutamate 5-semialdehyde + phosphate + NADP(+) = L-glutamyl 5-phosphate + NADPH + H(+). It functions in the pathway amino-acid biosynthesis; L-proline biosynthesis; L-glutamate 5-semialdehyde from L-glutamate: step 2/2. Catalyzes the NADPH-dependent reduction of L-glutamate 5-phosphate into L-glutamate 5-semialdehyde and phosphate. The product spontaneously undergoes cyclization to form 1-pyrroline-5-carboxylate. The protein is Gamma-glutamyl phosphate reductase of Mycobacterium marinum (strain ATCC BAA-535 / M).